Consider the following 324-residue polypeptide: Homocysteine S-methyltransferase 1 (324 aa).

Residues 6–320 (IKELIVEHPG…KDIAEIASAV (315 aa)) form the Hcy-binding domain. 3 residues coordinate Zn(2+): C238, C305, and C306.

Zn(2+) serves as cofactor.

The protein localises to the cytoplasm. It catalyses the reaction S-methyl-L-methionine + L-homocysteine = 2 L-methionine + H(+). Homocysteine S-methyltransferase involved in the conversion of S-adenosylmethionine (AdoMet) to methionine to control the methionine/AdoMet ratio. Also converts S-methylmethionine (SMM) to methionine. The chain is Homocysteine S-methyltransferase 1 (MHT1) from Saccharomyces cerevisiae (strain ATCC 204508 / S288c) (Baker's yeast).